Reading from the N-terminus, the 183-residue chain is Large ribosomal subunit protein uL5 (183 aa).

Belongs to the universal ribosomal protein uL5 family. As to quaternary structure, part of the 50S ribosomal subunit; part of the 5S rRNA/L5/L18/L25 subcomplex. Contacts the 5S rRNA and the P site tRNA. Forms a bridge to the 30S subunit in the 70S ribosome.

Functionally, this is one of the proteins that bind and probably mediate the attachment of the 5S RNA into the large ribosomal subunit, where it forms part of the central protuberance. In the 70S ribosome it contacts protein S13 of the 30S subunit (bridge B1b), connecting the 2 subunits; this bridge is implicated in subunit movement. Contacts the P site tRNA; the 5S rRNA and some of its associated proteins might help stabilize positioning of ribosome-bound tRNAs. This chain is Large ribosomal subunit protein uL5, found in Fusobacterium nucleatum subsp. nucleatum (strain ATCC 25586 / DSM 15643 / BCRC 10681 / CIP 101130 / JCM 8532 / KCTC 2640 / LMG 13131 / VPI 4355).